A 113-amino-acid chain; its full sequence is Putative pterin-4-alpha-carbinolamine dehydratase (113 aa).

This sequence belongs to the pterin-4-alpha-carbinolamine dehydratase family.

It carries out the reaction (4aS,6R)-4a-hydroxy-L-erythro-5,6,7,8-tetrahydrobiopterin = (6R)-L-erythro-6,7-dihydrobiopterin + H2O. In Saccharophagus degradans (strain 2-40 / ATCC 43961 / DSM 17024), this protein is Putative pterin-4-alpha-carbinolamine dehydratase.